A 98-amino-acid chain; its full sequence is Large ribosomal subunit protein uL23 (98 aa).

It belongs to the universal ribosomal protein uL23 family. In terms of assembly, part of the 50S ribosomal subunit. Contacts protein L29, and trigger factor when it is bound to the ribosome.

In terms of biological role, one of the early assembly proteins it binds 23S rRNA. One of the proteins that surrounds the polypeptide exit tunnel on the outside of the ribosome. Forms the main docking site for trigger factor binding to the ribosome. The polypeptide is Large ribosomal subunit protein uL23 (Halorhodospira halophila (strain DSM 244 / SL1) (Ectothiorhodospira halophila (strain DSM 244 / SL1))).